Consider the following 1395-residue polypeptide: DNA-directed RNA polymerase subunit beta' (1395 aa).

Zn(2+) is bound by residues Cys-70, Cys-72, Cys-85, and Cys-88. 3 residues coordinate Mg(2+): Asp-461, Asp-463, and Asp-465. Zn(2+) is bound by residues Cys-815, Cys-889, Cys-896, and Cys-899.

This sequence belongs to the RNA polymerase beta' chain family. In terms of assembly, the RNAP catalytic core consists of 2 alpha, 1 beta, 1 beta' and 1 omega subunit. When a sigma factor is associated with the core the holoenzyme is formed, which can initiate transcription. It depends on Mg(2+) as a cofactor. Zn(2+) is required as a cofactor.

It catalyses the reaction RNA(n) + a ribonucleoside 5'-triphosphate = RNA(n+1) + diphosphate. In terms of biological role, DNA-dependent RNA polymerase catalyzes the transcription of DNA into RNA using the four ribonucleoside triphosphates as substrates. This is DNA-directed RNA polymerase subunit beta' from Ruthia magnifica subsp. Calyptogena magnifica.